Here is a 376-residue protein sequence, read N- to C-terminus: Phytanoyl-CoA hydroxylase-interacting protein-like (376 aa).

A Fibronectin type-III domain is found at 52–161 (VPHNIKISNI…EIIEFCTADY (110 aa)).

Belongs to the PHYHIP family.

May play a role in the development of the central system. The sequence is that of Phytanoyl-CoA hydroxylase-interacting protein-like (phyhipl) from Xenopus tropicalis (Western clawed frog).